Consider the following 236-residue polypeptide: 2-C-methyl-D-erythritol 4-phosphate cytidylyltransferase (236 aa).

This sequence belongs to the IspD/TarI cytidylyltransferase family. IspD subfamily.

It catalyses the reaction 2-C-methyl-D-erythritol 4-phosphate + CTP + H(+) = 4-CDP-2-C-methyl-D-erythritol + diphosphate. It participates in isoprenoid biosynthesis; isopentenyl diphosphate biosynthesis via DXP pathway; isopentenyl diphosphate from 1-deoxy-D-xylulose 5-phosphate: step 2/6. In terms of biological role, catalyzes the formation of 4-diphosphocytidyl-2-C-methyl-D-erythritol from CTP and 2-C-methyl-D-erythritol 4-phosphate (MEP). This Burkholderia multivorans (strain ATCC 17616 / 249) protein is 2-C-methyl-D-erythritol 4-phosphate cytidylyltransferase.